The primary structure comprises 494 residues: Cytochrome P450 2A10 (494 aa).

N6-acetyllysine is present on Lys379. Heme is bound at residue Cys439.

The protein belongs to the cytochrome P450 family. Heme is required as a cofactor. As to expression, expressed in liver and lung as well as in nasal tissues.

The protein localises to the endoplasmic reticulum membrane. It localises to the microsome membrane. The enzyme catalyses an organic molecule + reduced [NADPH--hemoprotein reductase] + O2 = an alcohol + oxidized [NADPH--hemoprotein reductase] + H2O + H(+). Functionally, catalyzes the oxygenation of a variety of substrates, including ethanol and procarcinogens such as N-nitrosodiethylamine and phenacetin. Exhibits a high coumarin 7-hydroxylase activity. Converts also testosterone to androstenedione. In Oryctolagus cuniculus (Rabbit), this protein is Cytochrome P450 2A10 (CYP2A10).